A 163-amino-acid polypeptide reads, in one-letter code: TDIPQTMQDLDLQEVAGRWHSVAMVASDISLLDSESAPLRVYVEELRPTPEGNLEIILREGANHVCVERNIVAQKTEDPAVFTVNYQGERKISVLDTDYAHYMFFCVGPCLPSAEHGMVCQYLARTQKVDEEVMEKFSRALQPLPGHVQIIQDPSGGQERCGF.

2 disulfide bridges follow: Cys-66–Cys-161 and Cys-106–Cys-120.

The protein belongs to the calycin superfamily. Lipocalin family. Monomer.

The protein resides in the secreted. Functionally, lactoglobulin is the primary component of whey, it binds retinol and is probably involved in the transport of that molecule. The protein is Beta-lactoglobulin-2 (LGB2) of Equus asinus (Donkey).